The primary structure comprises 567 residues: Proton-coupled zinc antiporter SLC30A9, mitochondrial (567 aa).

Transmembrane regions (helical) follow at residues 238–258 (VVMV…LAWI), 313–333 (GVGI…MGLL), 341–361 (LLWA…TLLV), 391–411 (VILL…TCMG), and 423–443 (SLGS…LIYT). The LXXLL motif motif lies at 461–465 (LTELL).

Belongs to the cation diffusion facilitator (CDF) transporter (TC 2.A.4) family. SLC30A subfamily. As to quaternary structure, interacts with GRIP1, ESR1, AR and CTNNB1.

It localises to the mitochondrion membrane. It is found in the nucleus. The protein resides in the endoplasmic reticulum. It carries out the reaction Zn(2+)(in) + 2 H(+)(out) = Zn(2+)(out) + 2 H(+)(in). Its function is as follows. Acts as a zinc transporter involved in intracellular zinc homeostasis. Functions as a secondary coactivator for nuclear receptors by cooperating with p160 coactivators subtypes. Plays a role in transcriptional activation of Wnt-responsive genes. Functionally, mitochondrial proton-coupled zinc ion antiporter mediating the export of zinc from the mitochondria and involved in zinc homeostasis, zinc mobilization as well as mitochondrial morphology and health. In nucleus, functions as a secondary coactivator for nuclear receptors by cooperating with p160 coactivators subtypes. Plays a role in transcriptional activation of Wnt-responsive genes. The protein is Proton-coupled zinc antiporter SLC30A9, mitochondrial (Slc30a9) of Mus musculus (Mouse).